Reading from the N-terminus, the 283-residue chain is MTKRITTIKEMQHLSRTRKAHNKQIGFVPTMGALHDGHLQMVKQSIADNDYTVVSVFVNPLQFGPNEDFDAYPRTIEEDEAQLDALGADYVFYPSVEEMYPKPLELSINVHRMAEVLEGAKRPGHFDGVVTVVNKLFNIIRPDIAYFGKKDAQQLAIIEKMVEEFNHPITIRGMDTIRELDGLAKSSRNIYLTDNERQEAVQLYQSLLKAKQLYDAGERSSDVIIDEIHTHLTTHTSGTIEEIAIYSYPELIEQTQITGRIFISLAVKFSQARLIDNIIVEKS.

Residue 31–38 participates in ATP binding; the sequence is MGALHDGH. The active-site Proton donor is the His-38. Gln-62 provides a ligand contact to (R)-pantoate. Gln-62 contacts beta-alanine. 148 to 151 provides a ligand contact to ATP; it reads GKKD. Gln-154 lines the (R)-pantoate pocket. ATP-binding positions include Ile-177 and 185–188; that span reads KSSR.

Belongs to the pantothenate synthetase family. As to quaternary structure, homodimer.

It is found in the cytoplasm. It carries out the reaction (R)-pantoate + beta-alanine + ATP = (R)-pantothenate + AMP + diphosphate + H(+). Its pathway is cofactor biosynthesis; (R)-pantothenate biosynthesis; (R)-pantothenate from (R)-pantoate and beta-alanine: step 1/1. Its function is as follows. Catalyzes the condensation of pantoate with beta-alanine in an ATP-dependent reaction via a pantoyl-adenylate intermediate. The protein is Pantothenate synthetase of Oceanobacillus iheyensis (strain DSM 14371 / CIP 107618 / JCM 11309 / KCTC 3954 / HTE831).